A 344-amino-acid polypeptide reads, in one-letter code: S-methyl-5'-thioadenosine phosphorylase (344 aa).

Phosphate-binding positions include T51, R99–H100, and S132–A133. M234 is a binding site for substrate. A phosphate-binding site is contributed by S235. Residue D258 to D260 participates in substrate binding.

It belongs to the PNP/MTAP phosphorylase family. MTAP subfamily. In terms of assembly, homotrimer.

It is found in the cytoplasm. The protein resides in the nucleus. The catalysed reaction is S-methyl-5'-thioadenosine + phosphate = 5-(methylsulfanyl)-alpha-D-ribose 1-phosphate + adenine. It functions in the pathway amino-acid biosynthesis; L-methionine biosynthesis via salvage pathway; S-methyl-5-thio-alpha-D-ribose 1-phosphate from S-methyl-5'-thioadenosine (phosphorylase route): step 1/1. In terms of biological role, catalyzes the reversible phosphorylation of S-methyl-5'-thioadenosine (MTA) to adenine and 5-methylthioribose-1-phosphate. Involved in the breakdown of MTA, a major by-product of polyamine biosynthesis. Responsible for the first step in the methionine salvage pathway after MTA has been generated from S-adenosylmethionine. Has broad substrate specificity with 6-aminopurine nucleosides as preferred substrates. The protein is S-methyl-5'-thioadenosine phosphorylase of Phaeosphaeria nodorum (strain SN15 / ATCC MYA-4574 / FGSC 10173) (Glume blotch fungus).